We begin with the raw amino-acid sequence, 194 residues long: Molybdenum cofactor guanylyltransferase (194 aa).

GTP-binding positions include 12–14, lysine 25, aspartate 71, and aspartate 101; that span reads LAG. Mg(2+) is bound at residue aspartate 101.

It belongs to the MobA family. Monomer. Mg(2+) serves as cofactor.

The protein localises to the cytoplasm. The catalysed reaction is Mo-molybdopterin + GTP + H(+) = Mo-molybdopterin guanine dinucleotide + diphosphate. In terms of biological role, transfers a GMP moiety from GTP to Mo-molybdopterin (Mo-MPT) cofactor (Moco or molybdenum cofactor) to form Mo-molybdopterin guanine dinucleotide (Mo-MGD) cofactor. This Salmonella typhimurium (strain LT2 / SGSC1412 / ATCC 700720) protein is Molybdenum cofactor guanylyltransferase.